Here is a 1216-residue protein sequence, read N- to C-terminus: ATP-dependent helicase/nuclease subunit A (1216 aa).

Residues 26-488 enclose the UvrD-like helicase ATP-binding domain; it reads QKKTAEQIEA…ILLKENFRSS (463 aa). 47 to 54 is an ATP binding site; that stretch reads ASAGSGKT. Positions 515-802 constitute a UvrD-like helicase C-terminal domain; it reads KHQLVFANTK…ELMTIHKSKG (288 aa).

This sequence belongs to the helicase family. AddA subfamily. In terms of assembly, heterodimer of AddA and AddB/RexB. Requires Mg(2+) as cofactor.

The enzyme catalyses Couples ATP hydrolysis with the unwinding of duplex DNA by translocating in the 3'-5' direction.. It catalyses the reaction ATP + H2O = ADP + phosphate + H(+). Functionally, the heterodimer acts as both an ATP-dependent DNA helicase and an ATP-dependent, dual-direction single-stranded exonuclease. Recognizes the chi site generating a DNA molecule suitable for the initiation of homologous recombination. The AddA nuclease domain is required for chi fragment generation; this subunit has the helicase and 3' -&gt; 5' nuclease activities. This chain is ATP-dependent helicase/nuclease subunit A, found in Streptococcus pneumoniae (strain CGSP14).